Consider the following 256-residue polypeptide: Ubiquinone/menaquinone biosynthesis C-methyltransferase UbiE (256 aa).

Residues Thr-79, Asp-100, and 128–129 contribute to the S-adenosyl-L-methionine site; that span reads DA.

This sequence belongs to the class I-like SAM-binding methyltransferase superfamily. MenG/UbiE family.

It carries out the reaction a 2-demethylmenaquinol + S-adenosyl-L-methionine = a menaquinol + S-adenosyl-L-homocysteine + H(+). The catalysed reaction is a 2-methoxy-6-(all-trans-polyprenyl)benzene-1,4-diol + S-adenosyl-L-methionine = a 5-methoxy-2-methyl-3-(all-trans-polyprenyl)benzene-1,4-diol + S-adenosyl-L-homocysteine + H(+). Its pathway is quinol/quinone metabolism; menaquinone biosynthesis; menaquinol from 1,4-dihydroxy-2-naphthoate: step 2/2. The protein operates within cofactor biosynthesis; ubiquinone biosynthesis. In terms of biological role, methyltransferase required for the conversion of demethylmenaquinol (DMKH2) to menaquinol (MKH2) and the conversion of 2-polyprenyl-6-methoxy-1,4-benzoquinol (DDMQH2) to 2-polyprenyl-3-methyl-6-methoxy-1,4-benzoquinol (DMQH2). This chain is Ubiquinone/menaquinone biosynthesis C-methyltransferase UbiE, found in Pseudomonas aeruginosa (strain LESB58).